The sequence spans 409 residues: Casein kinase I isoform delta-B (409 aa).

One can recognise a Protein kinase domain in the interval 9–277; that stretch reads YRLGRKIGSG…YLRQLFRNLF (269 aa). ATP contacts are provided by residues 15-23 and Lys38; that span reads IGSGSFGDI. Asp128 (proton acceptor) is an active-site residue. Positions 300–315 are enriched in basic and acidic residues; it reads TAEEADRERRERDERM. The interval 300-409 is disordered; sequence TAEEADRERR…NSIPFDHHGK (110 aa). The segment at 317–341 is autoinhibitory; it reads HSRNPAARGIPAASGRPRPTQDGAP. Polar residues-rich tracts occupy residues 346 to 358 and 380 to 402; these read TPTS…SSPR and NVSS…QNSI.

Belongs to the protein kinase superfamily. In terms of assembly, monomer. Interacts with per1 and per2. Component of the circadian core oscillator. In terms of processing, autophosphorylated on serine and threonine residues.

The protein localises to the cytoplasm. Its subcellular location is the nucleus. It carries out the reaction L-seryl-[protein] + ATP = O-phospho-L-seryl-[protein] + ADP + H(+). The catalysed reaction is L-threonyl-[protein] + ATP = O-phospho-L-threonyl-[protein] + ADP + H(+). Exhibits substrate-dependent heparin activation. In terms of biological role, casein kinases are operationally defined by their preferential utilization of acidic proteins such as caseins as substrates. Central component of the circadian clock. May act as a negative regulator of circadian rhythmicity by phosphorylating per1 and per2, which may lead to their degradation. Participates in wnt signaling. This Danio rerio (Zebrafish) protein is Casein kinase I isoform delta-B (csnk1db).